Here is a 658-residue protein sequence, read N- to C-terminus: Biosynthetic arginine decarboxylase (658 aa).

Lys127 carries the N6-(pyridoxal phosphate)lysine modification. Residue 307 to 317 (FDVGGGLGVDY) participates in substrate binding.

The protein belongs to the Orn/Lys/Arg decarboxylase class-II family. SpeA subfamily. As to quaternary structure, homotetramer. Pyridoxal 5'-phosphate is required as a cofactor. Mg(2+) serves as cofactor. Processed post-translationally to a 70 kDa mature form. In terms of processing, the N-terminus is blocked.

It is found in the periplasm. It catalyses the reaction L-arginine + H(+) = agmatine + CO2. The protein operates within amine and polyamine biosynthesis; agmatine biosynthesis; agmatine from L-arginine: step 1/1. With respect to regulation, down-regulated by polyamine end products putrescine and spermidine. Its function is as follows. Catalyzes the biosynthesis of agmatine from arginine. The chain is Biosynthetic arginine decarboxylase (speA) from Escherichia coli (strain K12).